We begin with the raw amino-acid sequence, 449 residues long: Trigger factor (449 aa).

The region spanning 173-258 (GDRVTVDFVG…LKKVEWPHLP (86 aa)) is the PPIase FKBP-type domain.

The protein belongs to the FKBP-type PPIase family. Tig subfamily.

Its subcellular location is the cytoplasm. It catalyses the reaction [protein]-peptidylproline (omega=180) = [protein]-peptidylproline (omega=0). Involved in protein export. Acts as a chaperone by maintaining the newly synthesized protein in an open conformation. Functions as a peptidyl-prolyl cis-trans isomerase. The protein is Trigger factor of Burkholderia mallei (strain NCTC 10229).